The sequence spans 228 residues: Urease subunit gamma/beta (228 aa).

Residues 1-101 (MQLTERERDK…LVTVHDPIRG (101 aa)) form a urease gamma region. The tract at residues 102 to 228 (AASRRVAGEY…ARAAGFGGAQ (127 aa)) is urease beta.

The protein in the N-terminal section; belongs to the urease gamma subunit family. It in the C-terminal section; belongs to the urease beta subunit family. As to quaternary structure, heterohexamer of 3 UreC (alpha) and 3 UreAB (gamma/beta) subunits.

The protein resides in the cytoplasm. It catalyses the reaction urea + 2 H2O + H(+) = hydrogencarbonate + 2 NH4(+). It functions in the pathway nitrogen metabolism; urea degradation; CO(2) and NH(3) from urea (urease route): step 1/1. This Deinococcus radiodurans (strain ATCC 13939 / DSM 20539 / JCM 16871 / CCUG 27074 / LMG 4051 / NBRC 15346 / NCIMB 9279 / VKM B-1422 / R1) protein is Urease subunit gamma/beta.